Consider the following 209-residue polypeptide: Orotate phosphoribosyltransferase (209 aa).

5-phospho-alpha-D-ribose 1-diphosphate-binding positions include arginine 96, lysine 100, histidine 102, and 122–130 (EDLISTGGS). Residue serine 126 participates in orotate binding.

The protein belongs to the purine/pyrimidine phosphoribosyltransferase family. PyrE subfamily. As to quaternary structure, homodimer. It depends on Mg(2+) as a cofactor.

It carries out the reaction orotidine 5'-phosphate + diphosphate = orotate + 5-phospho-alpha-D-ribose 1-diphosphate. The protein operates within pyrimidine metabolism; UMP biosynthesis via de novo pathway; UMP from orotate: step 1/2. Catalyzes the transfer of a ribosyl phosphate group from 5-phosphoribose 1-diphosphate to orotate, leading to the formation of orotidine monophosphate (OMP). In Streptococcus sanguinis (strain SK36), this protein is Orotate phosphoribosyltransferase.